The primary structure comprises 447 residues: Na(+)-translocating NADH-quinone reductase subunit A (447 aa).

This sequence belongs to the NqrA family. In terms of assembly, composed of six subunits; NqrA, NqrB, NqrC, NqrD, NqrE and NqrF.

The catalysed reaction is a ubiquinone + n Na(+)(in) + NADH + H(+) = a ubiquinol + n Na(+)(out) + NAD(+). In terms of biological role, NQR complex catalyzes the reduction of ubiquinone-1 to ubiquinol by two successive reactions, coupled with the transport of Na(+) ions from the cytoplasm to the periplasm. NqrA to NqrE are probably involved in the second step, the conversion of ubisemiquinone to ubiquinol. This is Na(+)-translocating NADH-quinone reductase subunit A from Haemophilus influenzae (strain PittGG).